Consider the following 494-residue polypeptide: MASGILVNIKEEVTCPICLELLTEPLSLDCGHSFCQACITANHKESTPHQGERSCPLCRMSYPSENLRPNRHLANIVERLKEVMLSPEEGQKVGHCARHGEKLLLFCEQDGNVICWLCERSQEHRGHHTLLVEEVAEKYQEKLQVALEMMRQKQQDAEKLEADVREEQASWKIQIRNDKTNIMAEFKQLRDILDCEESKELQNLEKEEKNILKRLVQSESDMVLQTQSMRVLISDLERRLQGSVLELLQGVDDVIKRIETVTLQKPKTFLNEKRRVFRAPDLKAMLQAFKELTEVQRYWAHVTLVPSHPSYAVISEDERQVRYQFQIHQPSVKVNYFYGVLGSPSITSGKHYWEVDVTNKRDWILGICVSFKCNAKWNVLRPENYQPKNGYWVIGLQNTNNYSAFQDAVKYSDFQIGSRSTASVPLIVPLFMTIYPNRVGVFLDYEACTVSFFNVTNNGFLIYKFSNCHFSYPVFPYFSPMTCELPMTLCSPSS.

N-acetylalanine is present on Ala-2. The segment at 15–59 adopts an RING-type zinc-finger fold; that stretch reads CPICLELLTEPLSLDCGHSFCQACITANHKESTPHQGERSCPLCR. Ser-86 carries the post-translational modification Phosphoserine. The B box-type zinc-finger motif lies at 91–132; sequence QKVGHCARHGEKLLLFCEQDGNVICWLCERSQEHRGHHTLLV. The Zn(2+) site is built by Cys-96, His-99, Cys-118, and His-124. Residues 131 to 223 are a coiled coil; that stretch reads LVEEVAEKYQ…RLVQSESDMV (93 aa). The required for interaction with GABARAP and for autophagy stretch occupies residues 186–199; that stretch reads FKQLRDILDCEESK. One can recognise a B30.2/SPRY domain in the interval 280-494; that stretch reads PDLKAMLQAF…LPMTLCSPSS (215 aa).

It belongs to the TRIM/RBCC family. As to quaternary structure, can form homodimers and homotrimers. In addition to lower-order dimerization, also exhibits a higher-order multimerization and both low- and high-order multimerizations are essential for its restriction activity. Interacts with BTBD1 and BTBD2. Interacts with PSMC4, PSMC5, PSMD7 and HSPA8/HSC70. Interacts (via B30.2/SPRY domain) with HSPA1A/B. Interacts with PSMC2, MAP3K7/TAK1, TAB2 and TAB3. Interacts with SQSTM1. Interacts with TRIM6 and TRIM34. Interacts with ULK1 (phosphorylated form), GABARAP, GABARAPL1, GABARAPL2, MAP1LC3A, MAP1LC3C and BECN1. Post-translationally, degraded in a proteasome-independent fashion in the absence of viral infection but in a proteasome-dependent fashion following exposure to restriction sensitive virus. In terms of processing, autoubiquitinated in a RING finger- and UBE2D2-dependent manner. Monoubiquitinated by TRIM21. Deubiquitinated by Yersinia YopJ. Ubiquitination may not lead to proteasomal degradation.

The protein localises to the cytoplasm. It localises to the nucleus. It catalyses the reaction S-ubiquitinyl-[E2 ubiquitin-conjugating enzyme]-L-cysteine + [acceptor protein]-L-lysine = [E2 ubiquitin-conjugating enzyme]-L-cysteine + N(6)-ubiquitinyl-[acceptor protein]-L-lysine.. It functions in the pathway protein modification; protein ubiquitination. In terms of biological role, capsid-specific restriction factor that prevents infection from non-host-adapted retroviruses. Blocks viral replication early in the life cycle, after viral entry but before reverse transcription. In addition to acting as a capsid-specific restriction factor, also acts as a pattern recognition receptor that activates innate immune signaling in response to the retroviral capsid lattice. Binding to the viral capsid triggers its E3 ubiquitin ligase activity, and in concert with the heterodimeric ubiquitin conjugating enzyme complex UBE2V1-UBE2N (also known as UBC13-UEV1A complex) generates 'Lys-63'-linked polyubiquitin chains, which in turn are catalysts in the autophosphorylation of the MAP3K7/TAK1 complex (includes TAK1, TAB2, and TAB3). Activation of the MAP3K7/TAK1 complex by autophosphorylation results in the induction and expression of NF-kappa-B and MAPK-responsive inflammatory genes, thereby leading to an innate immune response in the infected cell. Plays a role in regulating autophagy through activation of autophagy regulator BECN1 by causing its dissociation from its inhibitors BCL2 and TAB2. The sequence is that of Tripartite motif-containing protein 5 (TRIM5) from Saguinus labiatus (Red-chested mustached tamarin).